The sequence spans 431 residues: MNLKKLLTSAVLSISLCQSAFAAPVEIDKVIGIVNQGVILKSEVDTIVNRVKKQAEEQSQELPKDETLRVQAVERLVNQTLMMQMAERMGLEISDSQLDQTLASMAKEQGGSIADLRRTIEGSGESFQAYREEIRKEITTQQVMRANVDRRVYVSEQEVDNLLKIMESQGQNAEEYDIGHILIDIPSDASADEIASAKTRADKVIELLNDEQEFKRIAISSSSGSQALEGGQLGWMGINEMPSLFAEAVKGKKQGAIIGPLRSGAGFHIIKVQDVRGRQVVETTETRSRHILIKPSIILSEEKARSMLAGFVKDLRADKADFAKLAKEYSEDPGSALKGGEYDWADPTSYVPAFRDTLLSLKQNEISEPFRSQFGWHIVQLLDTRVADKTEQAKRNRAHGMLFNRKFKEESFNWQQEMREQAHVEIFPIDE.

Positions 1–22 are cleaved as a signal peptide; sequence MNLKKLLTSAVLSISLCQSAFA. 2 PpiC domains span residues 173–274 and 283–383; these read AEEY…KVQD and TTET…QLLD.

Its subcellular location is the periplasm. The catalysed reaction is [protein]-peptidylproline (omega=180) = [protein]-peptidylproline (omega=0). Its function is as follows. Chaperone involved in the correct folding and assembly of outer membrane proteins. Recognizes specific patterns of aromatic residues and the orientation of their side chains, which are found more frequently in integral outer membrane proteins. May act in both early periplasmic and late outer membrane-associated steps of protein maturation. The polypeptide is Chaperone SurA (Pseudoalteromonas translucida (strain TAC 125)).